A 224-amino-acid polypeptide reads, in one-letter code: 7-cyano-7-deazaguanine synthase (224 aa).

Residue 12–22 (LSGGLDSSTVT) participates in ATP binding. The Zn(2+) site is built by C193, C201, C204, and C207.

The protein belongs to the QueC family. The cofactor is Zn(2+).

The catalysed reaction is 7-carboxy-7-deazaguanine + NH4(+) + ATP = 7-cyano-7-deazaguanine + ADP + phosphate + H2O + H(+). The protein operates within purine metabolism; 7-cyano-7-deazaguanine biosynthesis. In terms of biological role, catalyzes the ATP-dependent conversion of 7-carboxy-7-deazaguanine (CDG) to 7-cyano-7-deazaguanine (preQ(0)). The protein is 7-cyano-7-deazaguanine synthase of Prochlorococcus marinus subsp. pastoris (strain CCMP1986 / NIES-2087 / MED4).